The following is a 320-amino-acid chain: Aldose reductase (320 aa).

Catalysis depends on Tyr-60, which acts as the Proton donor. His-121 is a substrate binding site. 215–269 (SPLGSSEKNLAHDPVVEKVANKLNKTPGQVLIKWALQRGTSVIPKSSKDERIKEN) lines the NADP(+) pocket.

This sequence belongs to the aldo/keto reductase family.

It carries out the reaction an alditol + NAD(+) = an aldose + NADH + H(+). The catalysed reaction is an alditol + NADP(+) = an aldose + NADPH + H(+). This is Aldose reductase from Hordeum vulgare (Barley).